Reading from the N-terminus, the 183-residue chain is Dual-action ribosomal maturation protein DarP (183 aa).

Residues Met1–Val27 are disordered. Over residues Val9–Glu18 the composition is skewed to acidic residues.

This sequence belongs to the DarP family.

The protein resides in the cytoplasm. Member of a network of 50S ribosomal subunit biogenesis factors which assembles along the 30S-50S interface, preventing incorrect 23S rRNA structures from forming. Promotes peptidyl transferase center (PTC) maturation. The sequence is that of Dual-action ribosomal maturation protein DarP from Bordetella pertussis (strain Tohama I / ATCC BAA-589 / NCTC 13251).